A 630-amino-acid polypeptide reads, in one-letter code: tRNA uridine 5-carboxymethylaminomethyl modification enzyme MnmG (630 aa).

13-18 (GGGHAG) contributes to the FAD binding site. 273–287 (GPRYCPSIEDKVNRF) serves as a coordination point for NAD(+).

The protein belongs to the MnmG family. In terms of assembly, homodimer. Heterotetramer of two MnmE and two MnmG subunits. FAD is required as a cofactor.

It is found in the cytoplasm. In terms of biological role, NAD-binding protein involved in the addition of a carboxymethylaminomethyl (cmnm) group at the wobble position (U34) of certain tRNAs, forming tRNA-cmnm(5)s(2)U34. The protein is tRNA uridine 5-carboxymethylaminomethyl modification enzyme MnmG of Saccharophagus degradans (strain 2-40 / ATCC 43961 / DSM 17024).